A 325-amino-acid polypeptide reads, in one-letter code: Eukaryotic translation initiation factor 3 subunit I (325 aa).

WD repeat units follow at residues 8-47 (GHER…RLGT), 50-91 (GHTG…ALLK), 144-183 (CNDS…VLVN), and 186-225 (EHSR…HQKT). Position 219 is a phosphothreonine (T219). N6-acetyllysine is present on K264. A Glycyl lysine isopeptide (Lys-Gly) (interchain with G-Cter in ubiquitin) cross-link involves residue K282. A WD 5 repeat occupies 283–324 (GHFGPINSVAFHPDGKSYSSGGEDGYVRIHYFDPQYFEFEFE). The residue at position 308 (Y308) is a Phosphotyrosine.

It belongs to the eIF-3 subunit I family. Component of the eukaryotic translation initiation factor 3 (eIF-3) complex, which is composed of 13 subunits: EIF3A, EIF3B, EIF3C, EIF3D, EIF3E, EIF3F, EIF3G, EIF3H, EIF3I, EIF3J, EIF3K, EIF3L and EIF3M. The eIF-3 complex appears to include 3 stable modules: module A is composed of EIF3A, EIF3B, EIF3G and EIF3I; module B is composed of EIF3F, EIF3H, and EIF3M; and module C is composed of EIF3C, EIF3D, EIF3E, EIF3K and EIF3L. EIF3C of module C binds EIF3B of module A and EIF3H of module B, thereby linking the three modules. EIF3J is a labile subunit that binds to the eIF-3 complex via EIF3B. The eIF-3 complex interacts with RPS6KB1 under conditions of nutrient depletion. Mitogenic stimulation leads to binding and activation of a complex composed of MTOR and RPTOR, leading to phosphorylation and release of RPS6KB1 and binding of EIF4B to eIF-3. Phosphorylated by TGF-beta type II receptor.

It is found in the cytoplasm. Component of the eukaryotic translation initiation factor 3 (eIF-3) complex, which is required for several steps in the initiation of protein synthesis. The eIF-3 complex associates with the 40S ribosome and facilitates the recruitment of eIF-1, eIF-1A, eIF-2:GTP:methionyl-tRNAi and eIF-5 to form the 43S pre-initiation complex (43S PIC). The eIF-3 complex stimulates mRNA recruitment to the 43S PIC and scanning of the mRNA for AUG recognition. The eIF-3 complex is also required for disassembly and recycling of post-termination ribosomal complexes and subsequently prevents premature joining of the 40S and 60S ribosomal subunits prior to initiation. The eIF-3 complex specifically targets and initiates translation of a subset of mRNAs involved in cell proliferation, including cell cycling, differentiation and apoptosis, and uses different modes of RNA stem-loop binding to exert either translational activation or repression. This Bos taurus (Bovine) protein is Eukaryotic translation initiation factor 3 subunit I.